A 490-amino-acid polypeptide reads, in one-letter code: Cytochrome P450 2C9 (490 aa).

Cys435 contacts heme.

This sequence belongs to the cytochrome P450 family. The cofactor is heme.

It is found in the endoplasmic reticulum membrane. The protein localises to the microsome membrane. It catalyses the reaction an organic molecule + reduced [NADPH--hemoprotein reductase] + O2 = an alcohol + oxidized [NADPH--hemoprotein reductase] + H2O + H(+). The enzyme catalyses (5Z,8Z,11Z,14Z)-eicosatetraenoate + reduced [NADPH--hemoprotein reductase] + O2 = (8R,9S)-epoxy-(5Z,11Z,14Z)-eicosatrienoate + oxidized [NADPH--hemoprotein reductase] + H2O + H(+). It carries out the reaction (5Z,8Z,11Z,14Z)-eicosatetraenoate + reduced [NADPH--hemoprotein reductase] + O2 = (8S,9R)-epoxy-(5Z,11Z,14Z)-eicosatrienoate + oxidized [NADPH--hemoprotein reductase] + H2O + H(+). The catalysed reaction is (5Z,8Z,11Z,14Z)-eicosatetraenoate + reduced [NADPH--hemoprotein reductase] + O2 = (11R,12S)-epoxy-(5Z,8Z,14Z)-eicosatrienoate + oxidized [NADPH--hemoprotein reductase] + H2O + H(+). It catalyses the reaction (5Z,8Z,11Z,14Z)-eicosatetraenoate + reduced [NADPH--hemoprotein reductase] + O2 = (11S,12R)-epoxy-(5Z,8Z,14Z)-eicosatrienoate + oxidized [NADPH--hemoprotein reductase] + H2O + H(+). The enzyme catalyses (5Z,8Z,11Z,14Z)-eicosatetraenoate + reduced [NADPH--hemoprotein reductase] + O2 = (14R,15S)-epoxy-(5Z,8Z,11Z)-eicosatrienoate + oxidized [NADPH--hemoprotein reductase] + H2O + H(+). It carries out the reaction (5Z,8Z,11Z,14Z)-eicosatetraenoate + reduced [NADPH--hemoprotein reductase] + O2 = (14S,15R)-epoxy-(5Z,8Z,11Z)-eicosatrienoate + oxidized [NADPH--hemoprotein reductase] + H2O + H(+). The catalysed reaction is (5Z,8Z,11Z,14Z,17Z)-eicosapentaenoate + reduced [NADPH--hemoprotein reductase] + O2 = 8,9-epoxy-(5Z,11Z,14Z,17Z)-eicosatetraenoate + oxidized [NADPH--hemoprotein reductase] + H2O + H(+). It catalyses the reaction (5Z,8Z,11Z,14Z,17Z)-eicosapentaenoate + reduced [NADPH--hemoprotein reductase] + O2 = 11,12-epoxy-(5Z,8Z,14Z,17Z)-eicosatetraenoate + oxidized [NADPH--hemoprotein reductase] + H2O + H(+). The enzyme catalyses (5Z,8Z,11Z,14Z,17Z)-eicosapentaenoate + reduced [NADPH--hemoprotein reductase] + O2 = 14,15-epoxy-(5Z,8Z,11Z,17Z)-eicosatetraenoate + oxidized [NADPH--hemoprotein reductase] + H2O + H(+). It carries out the reaction (5Z,8Z,11Z,14Z,17Z)-eicosapentaenoate + reduced [NADPH--hemoprotein reductase] + O2 = (17R,18S)-epoxy-(5Z,8Z,11Z,14Z)-eicosatetraenoate + oxidized [NADPH--hemoprotein reductase] + H2O + H(+). The catalysed reaction is cholesterol + reduced [NADPH--hemoprotein reductase] + O2 = 25-hydroxycholesterol + oxidized [NADPH--hemoprotein reductase] + H2O + H(+). It catalyses the reaction 17beta-estradiol + reduced [NADPH--hemoprotein reductase] + O2 = 2-hydroxy-17beta-estradiol + oxidized [NADPH--hemoprotein reductase] + H2O + H(+). The enzyme catalyses estrone + reduced [NADPH--hemoprotein reductase] + O2 = 2-hydroxyestrone + oxidized [NADPH--hemoprotein reductase] + H2O + H(+). It carries out the reaction (5Z,8Z,11Z,14Z)-eicosatetraenoate + reduced [NADPH--hemoprotein reductase] + O2 = (11R)-hydroxy-(5Z,8Z,12E,14Z)-eicosatetraenoate + oxidized [NADPH--hemoprotein reductase] + H2O + H(+). The catalysed reaction is (5Z,8Z,11Z,14Z)-eicosatetraenoate + reduced [NADPH--hemoprotein reductase] + O2 = (12R)-hydroxy-(5Z,8Z,10E,14Z)-eicosatetraenoate + oxidized [NADPH--hemoprotein reductase] + H2O + H(+). It catalyses the reaction (5Z,8Z,11Z,14Z)-eicosatetraenoate + reduced [NADPH--hemoprotein reductase] + O2 = (15R)-hydroxy-(5Z,8Z,11Z,13E)-eicosatetraenoate + oxidized [NADPH--hemoprotein reductase] + H2O + H(+). The enzyme catalyses (5Z,8Z,11Z,14Z)-eicosatetraenoate + reduced [NADPH--hemoprotein reductase] + O2 = 10-hydroxy-(5Z,8Z,11Z,14Z)-eicosatetraenoate + oxidized [NADPH--hemoprotein reductase] + H2O + H(+). It carries out the reaction (9Z,12Z)-octadecadienoate + reduced [NADPH--hemoprotein reductase] + O2 = (13R)-hydroxy-(9Z,11E)-octadecadienoate + oxidized [NADPH--hemoprotein reductase] + H2O + H(+). The catalysed reaction is (9Z,12Z)-octadecadienoate + reduced [NADPH--hemoprotein reductase] + O2 = (9R)-hydroxy-(10E,12Z)-octadecadienoate + oxidized [NADPH--hemoprotein reductase] + H2O + H(+). It catalyses the reaction (5Z,8Z,11Z,14Z)-eicosatetraenoate + reduced [NADPH--hemoprotein reductase] + O2 = 19-hydroxy-(5Z,8Z,11Z,14Z)-eicosatetraenoate + oxidized [NADPH--hemoprotein reductase] + H2O + H(+). The enzyme catalyses (5Z,8Z,11Z,14Z)-eicosatetraenoate + reduced [NADPH--hemoprotein reductase] + O2 = 13(S)-hydroxy-(5Z,8Z,11Z,14Z)-eicosatetraenoate + oxidized [NADPH--hemoprotein reductase] + H2O + H(+). It carries out the reaction (5Z,8Z,11Z,14Z)-eicosatetraenoate + reduced [NADPH--hemoprotein reductase] + O2 = 14,15-epoxy-(5Z,8Z,11Z)-eicosatrienoate + oxidized [NADPH--hemoprotein reductase] + H2O + H(+). The catalysed reaction is (5Z,8Z,11Z,14Z)-eicosatetraenoate + reduced [NADPH--hemoprotein reductase] + O2 = 11,12-epoxy-(5Z,8Z,14Z)-eicosatrienoate + oxidized [NADPH--hemoprotein reductase] + H2O + H(+). It catalyses the reaction (5Z,8Z,11Z,14Z)-eicosatetraenoate + reduced [NADPH--hemoprotein reductase] + O2 = 13-hydroxy-(5Z,8Z,11Z,14Z)-eicosatetraenoate + oxidized [NADPH--hemoprotein reductase] + H2O + H(+). The enzyme catalyses (4R)-limonene + reduced [NADPH--hemoprotein reductase] + O2 = (1R,5S)-carveol + oxidized [NADPH--hemoprotein reductase] + H2O + H(+). It carries out the reaction (4S)-limonene + reduced [NADPH--hemoprotein reductase] + O2 = (1S,5R)-carveol + oxidized [NADPH--hemoprotein reductase] + H2O + H(+). The catalysed reaction is (4S)-limonene + reduced [NADPH--hemoprotein reductase] + O2 = (4S)-perillyl alcohol + oxidized [NADPH--hemoprotein reductase] + H2O + H(+). It participates in lipid metabolism; arachidonate metabolism. The protein operates within steroid metabolism; cholesterol metabolism. It functions in the pathway terpene metabolism; (4R)-limonene degradation. Functionally, a cytochrome P450 monooxygenase involved in the metabolism of various endogenous substrates, including fatty acids and steroids. Mechanistically, uses molecular oxygen inserting one oxygen atom into a substrate, and reducing the second into a water molecule, with two electrons provided by NADPH via cytochrome P450 reductase (NADPH--hemoprotein reductase). Catalyzes the epoxidation of double bonds of polyunsaturated fatty acids (PUFA). Catalyzes the hydroxylation of carbon-hydrogen bonds. Metabolizes cholesterol toward 25-hydroxycholesterol, a physiological regulator of cellular cholesterol homeostasis. Exhibits low catalytic activity for the formation of catechol estrogens from 17beta-estradiol (E2) and estrone (E1), namely 2-hydroxy E1 and E2. Catalyzes bisallylic hydroxylation and hydroxylation with double-bond migration of polyunsaturated fatty acids (PUFA). Also metabolizes plant monoterpenes such as limonene. Oxygenates (R)- and (S)-limonene to produce carveol and perillyl alcohol. Contributes to the wide pharmacokinetics variability of the metabolism of drugs such as S-warfarin, diclofenac, phenytoin, tolbutamide and losartan. The protein is Cytochrome P450 2C9 of Homo sapiens (Human).